The following is a 128-amino-acid chain: Ribosome-binding factor A (128 aa).

It belongs to the RbfA family. As to quaternary structure, monomer. Binds 30S ribosomal subunits, but not 50S ribosomal subunits or 70S ribosomes.

The protein resides in the cytoplasm. Its function is as follows. One of several proteins that assist in the late maturation steps of the functional core of the 30S ribosomal subunit. Associates with free 30S ribosomal subunits (but not with 30S subunits that are part of 70S ribosomes or polysomes). Required for efficient processing of 16S rRNA. May interact with the 5'-terminal helix region of 16S rRNA. The protein is Ribosome-binding factor A of Microcystis aeruginosa (strain NIES-843 / IAM M-2473).